A 287-amino-acid polypeptide reads, in one-letter code: 2-dehydro-3-deoxyphosphooctonate aldolase (287 aa).

The protein belongs to the KdsA family.

The protein resides in the cytoplasm. The catalysed reaction is D-arabinose 5-phosphate + phosphoenolpyruvate + H2O = 3-deoxy-alpha-D-manno-2-octulosonate-8-phosphate + phosphate. Its pathway is carbohydrate biosynthesis; 3-deoxy-D-manno-octulosonate biosynthesis; 3-deoxy-D-manno-octulosonate from D-ribulose 5-phosphate: step 2/3. It functions in the pathway bacterial outer membrane biogenesis; lipopolysaccharide biosynthesis. This chain is 2-dehydro-3-deoxyphosphooctonate aldolase, found in Magnetococcus marinus (strain ATCC BAA-1437 / JCM 17883 / MC-1).